A 135-amino-acid polypeptide reads, in one-letter code: Interleukin-4 (135 aa).

The signal sequence occupies residues 1–24; the sequence is MGLTYQLIPVLVCLLVCTSHLVHG. 3 disulfide bridges follow: cysteine 27–cysteine 135, cysteine 48–cysteine 85, and cysteine 70–cysteine 105. N-linked (GlcNAc...) asparagine glycosylation occurs at asparagine 62.

Belongs to the IL-4/IL-13 family.

It localises to the secreted. In terms of biological role, participates in at least several B-cell activation processes as well as of other cell types. It is a costimulator of DNA-synthesis. It induces the expression of class II MHC molecules on resting B-cells. It enhances both secretion and cell surface expression of IgE and IgG1. It also regulates the expression of the low affinity Fc receptor for IgE (CD23) on both lymphocytes and monocytes. Positively regulates IL31RA expression in macrophages. Stimulates autophagy in dendritic cells by interfering with mTORC1 signaling and through the induction of RUFY4. In Bubalus bubalis (Domestic water buffalo), this protein is Interleukin-4 (IL4).